We begin with the raw amino-acid sequence, 240 residues long: Uridylate kinase (240 aa).

An ATP-binding site is contributed by 12–15; the sequence is KLSG. Positions 20 to 25 are involved in allosteric activation by GTP; it reads GEKGFG. UMP is bound at residue G54. Positions 55 and 59 each coordinate ATP. Residues D74 and 135–142 contribute to the UMP site; that span reads TGSPYFST. Positions 163, 169, and 172 each coordinate ATP.

Belongs to the UMP kinase family. As to quaternary structure, homohexamer.

It localises to the cytoplasm. The enzyme catalyses UMP + ATP = UDP + ADP. It participates in pyrimidine metabolism; CTP biosynthesis via de novo pathway; UDP from UMP (UMPK route): step 1/1. With respect to regulation, allosterically activated by GTP. Inhibited by UTP. Catalyzes the reversible phosphorylation of UMP to UDP. This Lactiplantibacillus plantarum (strain ATCC BAA-793 / NCIMB 8826 / WCFS1) (Lactobacillus plantarum) protein is Uridylate kinase.